Consider the following 805-residue polypeptide: MASPSGQYIFGEFSDDEFKQFFVTARCTVELPPYNEHFFPCGPQSSGDFQDDMHLKFSEVIHGISGEDCPRIEFGIEEVIDHSTALPNNTDYSISSNLNPQAPEFILTCSSSPKTSNNVLHENNFDAINCQFSECAIPDGSGNADSDGTSGTGQRERKKKKKRPPGYYSYLEGVGDVPSETLVNGHANSTGLNSISTDDPDLAEDIPISTTSPRTCNSPDNFVDLNNEALSNDASMHNALDNARTAGQPEECSVTSSEQSCIPSDNGRESPVRTAVVQPFAGTDTTENLGVTNGQTLESSEEGTASNGVVLLPEVSSLSEEAKPEETSTAQAVVHLPGSASANPPAKSWASLFHNSKPSSTTQVAYVETKNATPVTSPQVTEKQVEIKEGPVPVSEDPVAIKIAELLEEVKLVHKPVSLQPRGLINKGNWCYINATLQALVACPPMYHLMKSIPVYTKAQRPCTSTPMIDSFVRLMNEFTNMPILPKAKQASGEKVIRDIRPGAPFEPAYIYRLLTVFKSSLSEKGRQEDAEEYLGFILNGLHEEMLSLKKLLLPQNDKIHINNGPDPVSEKEEINKDEQEGSDEEWEQVGPRHKSSVTRQADFVQTPITDIFGGHMRSVVYQQSSKESATLQPFFTLQLDIQSEKIRTVQDALESLVARESVQGYTTKTKQEVEICRRVTLEELPPVLVLHLKRFVFEKTGGCQKLIKNIEYPVDLEISKDLLSPGVKSKIFKGQRTYRLFAVVYHHGNSATGGHYTTDVFQIGLNGWLRIDDQTVKVINQYQVVKQTVERTAYLLYYRRVDLL.

The interval 139–170 (DGSGNADSDGTSGTGQRERKKKKKRPPGYYSY) is disordered. A compositionally biased stretch (polar residues) spans 143-153 (NADSDGTSGTG). The USP domain occupies 422–802 (RGLINKGNWC…TAYLLYYRRV (381 aa)). C431 acts as the Nucleophile in catalysis. Positions 561–593 (HINNGPDPVSEKEEINKDEQEGSDEEWEQVGPR) are disordered. Basic and acidic residues predominate over residues 569–580 (VSEKEEINKDEQ). H756 acts as the Proton acceptor in catalysis.

The protein belongs to the peptidase C19 family. USP10 subfamily.

The protein localises to the cytoplasm. It is found in the nucleus. The catalysed reaction is Thiol-dependent hydrolysis of ester, thioester, amide, peptide and isopeptide bonds formed by the C-terminal Gly of ubiquitin (a 76-residue protein attached to proteins as an intracellular targeting signal).. Its function is as follows. Hydrolase that can remove conjugated ubiquitin from target proteins such as p53/tp53, rps2/us5, rps3/us3, rps10/eS10, becn1, snx3 and cftr. Acts as an essential regulator of p53/tp53 stability: in unstressed cells, specifically deubiquitinates p53/tp53 in the cytoplasm, leading to counteracts MDM2 action and stabilize p53/tp53. Following DNA damage, translocates to the nucleus and deubiquitinates p53/tp53, leading to regulate the p53/TP53-dependent DNA damage response. Component of a regulatory loop that controls autophagy and p53/tp53 levels. Plays a key role in 40S ribosome subunit recycling when a ribosome has stalled during translation: acts both by inhibiting formation of stress granules, which store stalled translation pre-initiation complexes, and mediating deubiquitination of 40S ribosome subunits. Deubiquitinates cftr in early endosomes, enhancing its endocytic recycling. In Xenopus tropicalis (Western clawed frog), this protein is Ubiquitin carboxyl-terminal hydrolase 10 (usp10).